The following is a 2128-amino-acid chain: Spectrin beta chain, erythrocytic (2128 aa).

Over residues 1–15 (MTSATEFENVGNQPP) the composition is skewed to polar residues. The segment at 1-30 (MTSATEFENVGNQPPFSRINARWDAPDDEL) is disordered. The interval 2–275 (TSATEFENVG…IITYVVAFYH (274 aa)) is actin-binding. Position 36 is a phosphoserine (Ser36). 2 Calponin-homology (CH) domains span residues 54–158 (VVQK…LRFQ) and 173–278 (RSAK…HYFS). Thr104 carries the phosphothreonine modification. 17 Spectrin repeats span residues 303–411 (MIEK…LALR), 416–517 (RQEF…QRLE), 521–627 (ALQK…QLEQ), 630–733 (RLWK…DLQD), 736–838 (NFFQ…KLQE), 845–942 (VFGE…REAV), 950–1050 (NYCV…LSLG), 1054–1157 (KLQA…NTLT), 1162–1250 (FQEF…RHKK), 1267–1368 (ELQN…EQLS), 1381–1455 (ADLN…FLDL), 1473–1574 (LQIS…RLRD), 1576–1680 (HEAQ…RLEN), 1682–1784 (YHLF…MQLL), 1789–1890 (DLHR…RAQL), 1897–1997 (FRFF…DRLH), and 2004–2064 (QFSR…KPTT). Residue Ser1289 is modified to Phosphoserine. Ser2034 bears the Phosphoserine mark. Residues 2062–2108 (PTTLELKERQTPERPTEEPGPQEEEGETAGEAPQVHHAATERTSPVS) are disordered. Phosphothreonine occurs at positions 2064, 2072, and 2101. Residues 2066-2078 (ELKERQTPERPTE) are compositionally biased toward basic and acidic residues. 5 positions are modified to phosphoserine: Ser2105, Ser2108, Ser2114, Ser2116, and Ser2119.

This sequence belongs to the spectrin family. As to quaternary structure, composed of nonhomologous chains, alpha and beta, which aggregate to form dimers, tetramers, and higher polymers. Interacts with BCAM.

It is found in the cytoplasm. The protein resides in the cytoskeleton. Its subcellular location is the cell cortex. In terms of biological role, spectrin is the major constituent of the cytoskeletal network underlying the erythrocyte plasma membrane. It associates with band 4.1 and actin to form the cytoskeletal superstructure of the erythrocyte plasma membrane. In Mus musculus (Mouse), this protein is Spectrin beta chain, erythrocytic (Sptb).